Consider the following 796-residue polypeptide: Histone acetyltransferase KAT2B (796 aa).

Disordered regions lie at residues 1 to 32 (MSES…TECS), 77 to 97 (WKSQ…AEQP), and 371 to 408 (AGGG…DSKR). Residues 10–24 (GSPAVGAAGSAPAAP) show a composition bias toward low complexity. The segment covering 81 to 94 (NPPPTPPPPTPPRA) has biased composition (pro residues). Residues 392 to 408 (GEKRKPAEPLSHEDSKR) are compositionally biased toward basic and acidic residues. Residues 469-617 (LNQKPNKKIL…GATLMGCELN (149 aa)) form the N-acetyltransferase domain. The Proton donor/acceptor role is filled by Glu536. Acetyl-CoA-binding positions include 540–542 (CAV), 547–553 (QVKGYGT), and 578–581 (YAIG). Residues 687–791 (KDPDQLYSTL…KFFYTKIKEA (105 aa)) enclose the Bromo domain.

The protein belongs to the acetyltransferase family. GCN5 subfamily.

Its subcellular location is the nucleus. It localises to the cytoplasm. The protein localises to the cytoskeleton. The protein resides in the microtubule organizing center. It is found in the centrosome. The catalysed reaction is L-lysyl-[histone] + acetyl-CoA = N(6)-acetyl-L-lysyl-[histone] + CoA + H(+). The enzyme catalyses L-lysyl-[protein] + acetyl-CoA = N(6)-acetyl-L-lysyl-[protein] + CoA + H(+). It catalyses the reaction spermidine + acetyl-CoA = N(8)-acetylspermidine + CoA + H(+). Functions as a histone acetyltransferase (HAT) to promote transcriptional activation. Has significant histone acetyltransferase activity with core histones (H3 and H4), and also with nucleosome core particles. Has a a strong preference for acetylation of H3 at 'Lys-9' (H3K9ac). Also acetylates non-histone proteins. Involved in heart and limb development by mediating acetylation of tbx5. Also acetylates spermidine. Together with kat2a, required for growth and differentiation of craniofacial cartilage and bone by regulating acetylation of histone H3 at 'Lys-9' (H3K9ac). In Danio rerio (Zebrafish), this protein is Histone acetyltransferase KAT2B.